The primary structure comprises 509 residues: Butyrophilin-like protein 1 (509 aa).

Residues 1–27 (MMKGSPSVPPAGCLLPLLLLLFTGVSG) form the signal peptide. 2 Ig-like V-type domains span residues 28 to 139 (EVSW…QEVS) and 151 to 237 (PLVH…KAIL). Topologically, residues 28–250 (EVSWFSVKGP…PFFPKTCPWK (223 aa)) are extracellular. 2 disulfides stabilise this stretch: Cys53/Cys127 and Cys167/Cys221. Residues 251 to 271 (VALVCSVLILLVLLGGISLGI) form a helical membrane-spanning segment. Residues 272–509 (WKEHQVKRRE…SMGLSATAQP (238 aa)) are Cytoplasmic-facing. The region spanning 316–509 (RKALYKEDWK…SMGLSATAQP (194 aa)) is the B30.2/SPRY domain. The tract at residues 349–372 (MPDQDKTDSRTEENRGEETVSSSQ) is disordered. Basic and acidic residues predominate over residues 351 to 366 (DQDKTDSRTEENRGEE).

This sequence belongs to the immunoglobulin superfamily. BTN/MOG family.

The protein localises to the membrane. In Mus musculus (Mouse), this protein is Butyrophilin-like protein 1 (Btnl1).